The primary structure comprises 516 residues: MLNPKVAYMVWMTCLGLTLPSQAQSNDYRPSYHFTPDQYWMNEPNGLIKIGSTWHLFFQHNPTANVWGNICWGHATSTDLMHWAHKPTAIADENGVEAFTGTAYYDPNNTSGLGDSANPPYLAWFTGYTTSSQTQDQRLAFSVDNGATWTKFQGNPIISTSQEAPHDITGGLESRDPKVFFHRQSGNWIMVLAHGGQDKLSFWTSADTINWTWQSDLKSTSINGLSSDITGWEVPDMFELPVEGTEETTWVVMMTPAEGSPAGGNGVLAITGSFDGKSFTADPVDASTMWLDNGRDFDGALSWVNVPASDGRRIIAAVMNSYGSNPPTTTWKGMLSFPRTLSLKKVGTQQHFVQQPITELDTISTSLQILANQTITPGQTLLSSIRGTALDVRVAFYPDAGSVLSLAVRKGASEQTVIKYTQSDATLSVDRTESGDISYDPAAGGVHTAKLEEDGTGLVSIRVLVDTCSVEVFGGQGEAVISDLIFPSDSSDGLALEVTGGNAVLQSVDVRSVSLE.

The first 23 residues, 1 to 23 (MLNPKVAYMVWMTCLGLTLPSQA), serve as a signal peptide directing secretion. Substrate-binding positions include 41-43 (MNE) and Asn-61. Glu-43 is an active-site residue. N-linked (GlcNAc...) asparagine glycosylation is found at Asn-108 and Asn-109. Residue Asp-176 coordinates substrate. N-linked (GlcNAc...) asparagine glycosylation occurs at Asn-210. A substrate-binding site is contributed by Asn-320. N-linked (GlcNAc...) asparagine glycosylation occurs at Asn-372.

The protein belongs to the glycosyl hydrolase 32 family.

The protein localises to the secreted. It catalyses the reaction Endohydrolysis of (2-&gt;1)-beta-D-fructosidic linkages in inulin.. Its function is as follows. Endo-inulinase involved in utilization of the plant storage polymer inulin, consisting of fructooligosaccharides with a degree of polymerization (DP) value from 2 to 60. In Aspergillus ficuum, this protein is Extracellular endo-inulinase inu2 (inu2).